A 351-amino-acid polypeptide reads, in one-letter code: Probable cell division control protein 7 homolog 1 (351 aa).

The 321-residue stretch at 21-341 (YTPIEKIGEG…ASDALSHPFF (321 aa)) folds into the Protein kinase domain. ATP-binding positions include 27–35 (IGEGSFSVV) and lysine 50. Residue aspartate 137 is the Proton acceptor of the active site.

The protein belongs to the protein kinase superfamily. Ser/Thr protein kinase family. CDC7 subfamily. Mg(2+) is required as a cofactor.

The enzyme catalyses L-seryl-[protein] + ATP = O-phospho-L-seryl-[protein] + ADP + H(+). It catalyses the reaction L-threonyl-[protein] + ATP = O-phospho-L-threonyl-[protein] + ADP + H(+). Its function is as follows. Serine/threonine-protein kinase. Needed for the initiation of DNA synthesis during mitosis as well as for synaptonemal complex formation and commitment to recombination during meiosis. This Encephalitozoon cuniculi (strain GB-M1) (Microsporidian parasite) protein is Probable cell division control protein 7 homolog 1 (CDC7-1).